The sequence spans 145 residues: Small ribosomal subunit protein bS6 (145 aa).

Belongs to the bacterial ribosomal protein bS6 family.

Binds together with bS18 to 16S ribosomal RNA. In Mycoplasmopsis agalactiae (strain NCTC 10123 / CIP 59.7 / PG2) (Mycoplasma agalactiae), this protein is Small ribosomal subunit protein bS6.